A 60-amino-acid chain; its full sequence is Lantibiotic Pep5 (60 aa).

Residues Met1–Gln26 constitute a propeptide that is removed on maturation. Residues Met1 to Gly29 are disordered. Residue Thr27 is modified to 2-oxobutanoic acid. Positions Ser35–Cys39 form a cross-link, lanthionine (Ser-Cys). 2 positions are modified to 2,3-didehydrobutyrine: Thr42 and Thr46. The segment at residues Thr50–Cys53 is a cross-link (beta-methyllanthionine (Thr-Cys)). The segment at residues Ser52–Cys59 is a cross-link (lanthionine (Ser-Cys)).

It belongs to the type A lantibiotic family. In terms of processing, maturation of lantibiotics involves the enzymatic conversion of Thr, and Ser into dehydrated AA and the formation of thioether bonds with cysteine. This is followed by membrane translocation and cleavage of the modified precursor. Post-translationally, after proteolysis of the propeptide, the N-terminal 2,3-didehydrobutyrine hydrolyzes to 2-oxobutanoic acid, possibly spontaneously.

In terms of biological role, lanthionine-containing peptide antibiotic (lantibiotic) active on Gram-positive bacteria. The bactericidal activity of lantibiotics is based on depolarization of energized bacterial cytoplasmic membranes, initiated by the formation of aqueous transmembrane pores. This chain is Lantibiotic Pep5 (pepA), found in Staphylococcus epidermidis.